The chain runs to 315 residues: DNA-directed RNA polymerase subunit alpha (315 aa).

An alpha N-terminal domain (alpha-NTD) region spans residues 1–228 (MLEIEKPKIE…EHLRLFVGLT (228 aa)). The alpha C-terminal domain (alpha-CTD) stretch occupies residues 245–315 (KNKLLEMPIE…LGLDLRHDEE (71 aa)).

The protein belongs to the RNA polymerase alpha chain family. As to quaternary structure, homodimer. The RNAP catalytic core consists of 2 alpha, 1 beta, 1 beta' and 1 omega subunit. When a sigma factor is associated with the core the holoenzyme is formed, which can initiate transcription.

The catalysed reaction is RNA(n) + a ribonucleoside 5'-triphosphate = RNA(n+1) + diphosphate. Functionally, DNA-dependent RNA polymerase catalyzes the transcription of DNA into RNA using the four ribonucleoside triphosphates as substrates. The chain is DNA-directed RNA polymerase subunit alpha from Desulforudis audaxviator (strain MP104C).